A 367-amino-acid chain; its full sequence is Methylated-thiol--coenzyme M methyltransferase (367 aa).

The Zn(2+) site is built by His236, Cys238, and Cys313.

Belongs to the uroporphyrinogen decarboxylase family. In terms of assembly, homodimer. Zn(2+) serves as cofactor.

It catalyses the reaction methanethiol + coenzyme M = methyl-coenzyme M + hydrogen sulfide + H(+). Methyltransferase involved in methanogenesis from methylated-thiols. Catalyzes two successive steps: mediates the transfer of a methyl group from the substrate to the cobalt cofactor of a methylated-thiol-specific corrinoid protein (MtsB), and the subsequent transfer of the methyl group from the corrinoid protein to coenzyme M. The sequence is that of Methylated-thiol--coenzyme M methyltransferase (mtsA) from Methanosarcina mazei (strain ATCC BAA-159 / DSM 3647 / Goe1 / Go1 / JCM 11833 / OCM 88) (Methanosarcina frisia).